The sequence spans 409 residues: Microfibrillar-associated protein 3-like (409 aa).

The signal sequence occupies residues 1-28; that stretch reads MDRLKSHLTVCFLPSVPFLILVSTLATA. Over 29–149 the chain is Extracellular; sequence KSVTNSTLNG…LRVIFTSGDM (121 aa). N-linked (GlcNAc...) asparagine glycosylation is found at asparagine 33, asparagine 37, asparagine 67, asparagine 111, and asparagine 135. Positions 47-141 constitute an Ig-like C2-type domain; the sequence is PVIIARTDHI…GTVNNTVTLR (95 aa). A disulfide bond links cysteine 68 and cysteine 125. The helical transmembrane segment at 150 to 172 threads the bilayer; sequence GVYYMVVCLVAFTIVMVLNITRL. Residues 173 to 409 are Cytoplasmic-facing; it reads CMMSSHLKKT…NTCIIYESHV (237 aa). Tyrosine 287 carries the phosphotyrosine; by EGFR modification. Disordered regions lie at residues 292 to 311 and 320 to 385; these read SLKRSDSPAADSDASSLHEQ and SVHP…VLPP. Phosphoserine is present on residues serine 298, serine 303, serine 306, and serine 307. Positions 339–355 are enriched in basic and acidic residues; that stretch reads EVKDVEETELSAEHSPE. A compositionally biased stretch (low complexity) spans 363 to 377; that stretch reads VTSTELTSEEPTPVE.

As to expression, highly expressed in testis.

Its subcellular location is the cell membrane. It is found in the nucleus. It localises to the cytoplasm. Functionally, may participate in the nuclear signaling of EGFR and MAPK1/ERK2. May a have a role in metastasis. The protein is Microfibrillar-associated protein 3-like (MFAP3L) of Homo sapiens (Human).